Reading from the N-terminus, the 412-residue chain is Serine hydroxymethyltransferase (412 aa).

(6S)-5,6,7,8-tetrahydrofolate contacts are provided by residues Leu-120 and 124–126; that span reads GHL. Lys-229 bears the N6-(pyridoxal phosphate)lysine mark. 352 to 354 is a binding site for (6S)-5,6,7,8-tetrahydrofolate; that stretch reads SPF.

It belongs to the SHMT family. Homodimer. The cofactor is pyridoxal 5'-phosphate.

The protein resides in the cytoplasm. The catalysed reaction is (6R)-5,10-methylene-5,6,7,8-tetrahydrofolate + glycine + H2O = (6S)-5,6,7,8-tetrahydrofolate + L-serine. The protein operates within one-carbon metabolism; tetrahydrofolate interconversion. It participates in amino-acid biosynthesis; glycine biosynthesis; glycine from L-serine: step 1/1. Functionally, catalyzes the reversible interconversion of serine and glycine with tetrahydrofolate (THF) serving as the one-carbon carrier. This reaction serves as the major source of one-carbon groups required for the biosynthesis of purines, thymidylate, methionine, and other important biomolecules. Also exhibits THF-independent aldolase activity toward beta-hydroxyamino acids, producing glycine and aldehydes, via a retro-aldol mechanism. The polypeptide is Serine hydroxymethyltransferase (Acetivibrio thermocellus (strain ATCC 27405 / DSM 1237 / JCM 9322 / NBRC 103400 / NCIMB 10682 / NRRL B-4536 / VPI 7372) (Clostridium thermocellum)).